The sequence spans 120 residues: U13-lycotoxin-Ls1f (120 aa).

An N-terminal signal peptide occupies residues 1-16; the sequence is MKILFVLISILYAVYC. The propeptide occupies 17 to 54; it reads FSSEEDVDSAYLANELEPVEDINSEQYAALEPKEEQER. 4 disulfides stabilise this stretch: Cys56–Cys70, Cys63–Cys76, Cys69–Cys87, and Cys78–Cys85. Residues 56–95 enclose the Agouti domain; that stretch reads CAGMGQDCKDDCDCCLNIATCNCWFGRYFCSCTFGDYQTC.

It belongs to the neurotoxin 05 (agouti) family. Post-translationally, contains 6 disulfide bonds. As to expression, expressed by the venom gland.

The protein localises to the secreted. This chain is U13-lycotoxin-Ls1f, found in Lycosa singoriensis (Wolf spider).